The following is a 275-amino-acid chain: NH(3)-dependent NAD(+) synthetase (275 aa).

Position 47 to 54 (47 to 54) interacts with ATP; the sequence is GMSGGQDS. Asp-53 lines the Mg(2+) pocket. Arg-141 contacts deamido-NAD(+). Thr-161 contributes to the ATP binding site. A Mg(2+)-binding site is contributed by Glu-166. Lys-174 and Asp-181 together coordinate deamido-NAD(+). ATP-binding residues include Lys-190 and Thr-212. 261 to 262 lines the deamido-NAD(+) pocket; the sequence is HK.

Belongs to the NAD synthetase family. In terms of assembly, homodimer.

The catalysed reaction is deamido-NAD(+) + NH4(+) + ATP = AMP + diphosphate + NAD(+) + H(+). The protein operates within cofactor biosynthesis; NAD(+) biosynthesis; NAD(+) from deamido-NAD(+) (ammonia route): step 1/1. Its function is as follows. Catalyzes the ATP-dependent amidation of deamido-NAD to form NAD. Uses ammonia as a nitrogen source. This chain is NH(3)-dependent NAD(+) synthetase, found in Oceanobacillus iheyensis (strain DSM 14371 / CIP 107618 / JCM 11309 / KCTC 3954 / HTE831).